The chain runs to 579 residues: Proline--tRNA ligase (579 aa).

The protein belongs to the class-II aminoacyl-tRNA synthetase family. ProS type 1 subfamily. Homodimer.

It localises to the cytoplasm. The catalysed reaction is tRNA(Pro) + L-proline + ATP = L-prolyl-tRNA(Pro) + AMP + diphosphate. In terms of biological role, catalyzes the attachment of proline to tRNA(Pro) in a two-step reaction: proline is first activated by ATP to form Pro-AMP and then transferred to the acceptor end of tRNA(Pro). As ProRS can inadvertently accommodate and process non-cognate amino acids such as alanine and cysteine, to avoid such errors it has two additional distinct editing activities against alanine. One activity is designated as 'pretransfer' editing and involves the tRNA(Pro)-independent hydrolysis of activated Ala-AMP. The other activity is designated 'posttransfer' editing and involves deacylation of mischarged Ala-tRNA(Pro). The misacylated Cys-tRNA(Pro) is not edited by ProRS. The chain is Proline--tRNA ligase from Chlamydia muridarum (strain MoPn / Nigg).